The sequence spans 295 residues: Acetylglutamate kinase (295 aa).

Substrate is bound by residues 64-65 (GG), R86, and N190.

The protein belongs to the acetylglutamate kinase family. ArgB subfamily.

The protein resides in the cytoplasm. The enzyme catalyses N-acetyl-L-glutamate + ATP = N-acetyl-L-glutamyl 5-phosphate + ADP. It functions in the pathway amino-acid biosynthesis; L-arginine biosynthesis; N(2)-acetyl-L-ornithine from L-glutamate: step 2/4. Its function is as follows. Catalyzes the ATP-dependent phosphorylation of N-acetyl-L-glutamate. This chain is Acetylglutamate kinase, found in Heliobacterium modesticaldum (strain ATCC 51547 / Ice1).